The sequence spans 549 residues: Glucose-6-phosphate isomerase (549 aa).

An N6-acetyllysine mark is found at Lys-80, Lys-228, and Lys-234. Glu-355 functions as the Proton donor in the catalytic mechanism. Catalysis depends on residues His-386 and Lys-514.

Belongs to the GPI family.

The protein resides in the cytoplasm. The catalysed reaction is alpha-D-glucose 6-phosphate = beta-D-fructose 6-phosphate. It functions in the pathway carbohydrate biosynthesis; gluconeogenesis. Its pathway is carbohydrate degradation; glycolysis; D-glyceraldehyde 3-phosphate and glycerone phosphate from D-glucose: step 2/4. Its function is as follows. Catalyzes the reversible isomerization of glucose-6-phosphate to fructose-6-phosphate. The chain is Glucose-6-phosphate isomerase from Shigella flexneri.